The sequence spans 804 residues: Zinc finger protein YGR067C (804 aa).

2 C2H2-type zinc fingers span residues 8-30 and 36-59; these read YICS…ERSH and FQCQ…RTVH. Polar residues predominate over residues 782-796; sequence QEFSASSTDNKQSKN. The disordered stretch occupies residues 782–804; that stretch reads QEFSASSTDNKQSKNIEIFSQIK.

It is found in the nucleus. This is Zinc finger protein YGR067C from Saccharomyces cerevisiae (strain ATCC 204508 / S288c) (Baker's yeast).